Here is a 136-residue protein sequence, read N- to C-terminus: UPF0299 membrane protein PM0880 (136 aa).

The next 4 membrane-spanning stretches (helical) occupy residues 5–25 (IVDL…GEWI), 29–49 (LNIG…GLTF), 67–87 (YMAL…DVLF), and 92–112 (VLLL…GLLS).

This sequence belongs to the UPF0299 family.

The protein resides in the cell inner membrane. This is UPF0299 membrane protein PM0880 from Pasteurella multocida (strain Pm70).